We begin with the raw amino-acid sequence, 633 residues long: Early transcription factor 70 kDa subunit (633 aa).

The region spanning 32–185 (RTILDHNESV…SNIISIMSDE (154 aa)) is the Helicase ATP-binding domain. 45 to 52 (HIMGSGKT) lines the ATP pocket. A DEXH box motif is present at residues 135–138 (DEAH). The Helicase C-terminal domain occupies 326–505 (KFKYFIDTIG…TLPFDIKKLL (180 aa)).

It belongs to the helicase family. VETF subfamily. As to quaternary structure, heterodimer of a 70 kDa and a 82 kDa subunit. Part of the early transcription complex composed of ETF, RAP94, and the DNA-directed RNA polymerase.

It localises to the virion. Functionally, acts with RNA polymerase to initiate transcription from early gene promoters. Is recruited by the RPO-associated protein of 94 kDa (RAP94) to form the early transcription complex, which also contains the core RNA polymerase. ETF heterodimer binds to early gene promoters. The sequence is that of Early transcription factor 70 kDa subunit (VETFS) from Vertebrata (FPV).